A 154-amino-acid chain; its full sequence is MSLIPSIFGGPRSNVFDPFSLDMWDPFKDFHVPTSSVSAENSAFVNTRVDWKETQEAHVLKADIPGLKKEEVKVQIEDDRVLQISGERNVEKEDKNDTWHRVDRSSGKFMRRFRLPENAKVEQVKACMENGVLTVTIPKEEVKKSDVKPIEISG.

Residues 40-154 (ENSAFVNTRV…SDVKPIEISG (115 aa)) enclose the sHSP domain.

This sequence belongs to the small heat shock protein (HSP20) family. In terms of assembly, forms oligomeric structures.

The protein localises to the cytoplasm. This is 17.6 kDa class I heat shock protein (HSP17.6-L) from Glycine max (Soybean).